The chain runs to 381 residues: Alkanesulfonate monooxygenase (381 aa).

Belongs to the SsuD family. In terms of assembly, homotetramer.

The catalysed reaction is an alkanesulfonate + FMNH2 + O2 = an aldehyde + FMN + sulfite + H2O + 2 H(+). Its function is as follows. Catalyzes the desulfonation of aliphatic sulfonates. The chain is Alkanesulfonate monooxygenase from Escherichia fergusonii (strain ATCC 35469 / DSM 13698 / CCUG 18766 / IAM 14443 / JCM 21226 / LMG 7866 / NBRC 102419 / NCTC 12128 / CDC 0568-73).